The chain runs to 84 residues: Beta-defensin 119 (84 aa).

An N-terminal signal peptide occupies residues 1–21; the sequence is MKLLYLFLAILLAIEEPVISG. 3 disulfides stabilise this stretch: C28–C55, C35–C49, and C39–C56.

It belongs to the beta-defensin family. Abundant expression in the male reproductive tract only. Abundant expressed in testis and the caput region of epididymis, but low in the corpus region.

It localises to the secreted. In terms of biological role, has antibacterial activity. The chain is Beta-defensin 119 (DEFB119) from Homo sapiens (Human).